The following is a 496-amino-acid chain: Lysine--tRNA ligase (496 aa).

Residues glutamate 408 and glutamate 415 each contribute to the Mg(2+) site.

The protein belongs to the class-II aminoacyl-tRNA synthetase family. Homodimer. The cofactor is Mg(2+).

The protein localises to the cytoplasm. The catalysed reaction is tRNA(Lys) + L-lysine + ATP = L-lysyl-tRNA(Lys) + AMP + diphosphate. In Legionella pneumophila (strain Lens), this protein is Lysine--tRNA ligase.